The sequence spans 225 residues: Thymidylate kinase (225 aa).

Position 9–16 (9–16 (GIEGCGKT)) interacts with ATP.

Belongs to the thymidylate kinase family.

The catalysed reaction is dTMP + ATP = dTDP + ADP. Functionally, phosphorylation of dTMP to form dTDP in both de novo and salvage pathways of dTTP synthesis. The chain is Thymidylate kinase from Citrifermentans bemidjiense (strain ATCC BAA-1014 / DSM 16622 / JCM 12645 / Bem) (Geobacter bemidjiensis).